The sequence spans 72 residues: Guanine nucleotide-binding protein G(I)/G(S)/G(O) subunit gamma-12 (72 aa).

Serine 2 carries the N-acetylserine modification. Serine 10 and serine 26 each carry phosphoserine. Tyrosine 42 carries the phosphotyrosine modification. The residue at position 49 (serine 49) is a Phosphoserine. Cysteine methyl ester is present on cysteine 69. Residue cysteine 69 is the site of S-geranylgeranyl cysteine attachment. A propeptide spans isoleucine 70–leucine 72 (removed in mature form).

The protein belongs to the G protein gamma family. As to quaternary structure, g proteins are composed of 3 units, alpha, beta and gamma.

Its subcellular location is the cell membrane. In terms of biological role, guanine nucleotide-binding proteins (G proteins) are involved as a modulator or transducer in various transmembrane signaling systems. The beta and gamma chains are required for the GTPase activity, for replacement of GDP by GTP, and for G protein-effector interaction. In Mus musculus (Mouse), this protein is Guanine nucleotide-binding protein G(I)/G(S)/G(O) subunit gamma-12 (Gng12).